The sequence spans 341 residues: Protein-glutamate methylesterase/protein-glutamine glutaminase 2 (341 aa).

A Response regulatory domain is found at 7–120 (KTLIVDDSLL…NRDLDSFFSE (114 aa)). A 4-aspartylphosphate modification is found at aspartate 58. Positions 155 to 341 (VIAIGASTGG…QALYKLINQL (187 aa)) constitute a CheB-type methylesterase domain. Catalysis depends on residues serine 161, histidine 187, and aspartate 283.

The protein belongs to the CheB family. In terms of processing, phosphorylated by CheA. Phosphorylation of the N-terminal regulatory domain activates the methylesterase activity.

The protein localises to the cytoplasm. The enzyme catalyses [protein]-L-glutamate 5-O-methyl ester + H2O = L-glutamyl-[protein] + methanol + H(+). It carries out the reaction L-glutaminyl-[protein] + H2O = L-glutamyl-[protein] + NH4(+). Its function is as follows. Involved in chemotaxis. Part of a chemotaxis signal transduction system that modulates chemotaxis in response to various stimuli. Catalyzes the demethylation of specific methylglutamate residues introduced into the chemoreceptors (methyl-accepting chemotaxis proteins or MCP) by CheR. Also mediates the irreversible deamidation of specific glutamine residues to glutamic acid. In Syntrophomonas wolfei subsp. wolfei (strain DSM 2245B / Goettingen), this protein is Protein-glutamate methylesterase/protein-glutamine glutaminase 2.